The sequence spans 339 residues: MSKNAYAQSGVDVEAGYEVVERIKKHVARTERAGVMGGLGGFGGMFDLSKTGVKEPVLISGTDGVGTKLMLAIKYDKHDTIGQDCVAMCVNDIIAAGAEPLYFLDYVATGKNEPAKLEQVVAGVAEGCVQSGVALIGGETAEMPGMYGEDDYDLAGFAVGVAEKSQIIDGSKVAEGDVLLGLASSGIHSNGYSLVRRVFADYTGEEVLPELEGQKLKDVLLEPTRIYVKAALPLIKEELVNGIAHITGGGFIENVPRMFSDDLAAEIDESKVPVLPIFKALEKYGEIKHEEMFEIFNMGIGLMFAVKPENVERVKELLDEPVYEIGRIVKKDGASVVIK.

It belongs to the AIR synthase family.

The protein localises to the cytoplasm. The enzyme catalyses 2-formamido-N(1)-(5-O-phospho-beta-D-ribosyl)acetamidine + ATP = 5-amino-1-(5-phospho-beta-D-ribosyl)imidazole + ADP + phosphate + H(+). Its pathway is purine metabolism; IMP biosynthesis via de novo pathway; 5-amino-1-(5-phospho-D-ribosyl)imidazole from N(2)-formyl-N(1)-(5-phospho-D-ribosyl)glycinamide: step 2/2. In Streptococcus thermophilus (strain ATCC BAA-491 / LMD-9), this protein is Phosphoribosylformylglycinamidine cyclo-ligase.